Consider the following 1045-residue polypeptide: Protein madd-4 (1045 aa).

A signal peptide spans 1–23 (MKCSYTVVFLLFYLLIASFHVDA). 5 TSP type-1 domains span residues 24–71 (LSWA…KTCE), 236–292 (RCRW…NCVS), 294–510 (SCGR…HPCP), 512–572 (FWLT…NVVA), and 576–635 (TWVT…GSCS). Disulfide bonds link cysteine 35–cysteine 65, cysteine 39–cysteine 70, and cysteine 50–cysteine 55. Asparagine 268 and asparagine 280 each carry an N-linked (GlcNAc...) asparagine glycan. The 96-residue stretch at 637 to 732 (PELLSNRVFE…FTDRLQGNVT (96 aa)) folds into the Ig-like C2-type domain. The cysteines at positions 674 and 722 are disulfide-linked. Residues asparagine 730 and asparagine 781 are each glycosylated (N-linked (GlcNAc...) asparagine). The region spanning 811-873 (RWDIGHWSEC…TRPCHREDCP (63 aa)) is the TSP type-1 6 domain. Residues asparagine 899 and asparagine 906 are each glycosylated (N-linked (GlcNAc...) asparagine). One can recognise a TSP type-1 7 domain in the interval 932–990 (CKAEWRTSDWGSCSSECGTGGVQLRLLSCVWISSGRPAGRNCEQMRRPHSARACVADEP). The 38-residue stretch at 1004 to 1041 (RDASCQDQSRFCDIIKLFHSCDSLEVRQKCCSTCTFVE) folds into the PLAC domain.

Interacts with eva-1 (via the SUEL-type lectin domain). Interacts with unc-5. Interacts with unc-40; the interaction is required for the localization of unc-40 to postsynaptic domains. Isoform a forms homodimers and heterodimers with isoform b. Isoform b forms homodimers and heterodimers with isoform a. Isoform b interacts with nlg-1 (via extracellular domain); the interaction is required for nlg-1 localization to postsynaptic domains. Isoform b interacts (via the Ig-like C2-type domain) with nrx-1 (via C-terminus). Isoform a: Expressed in the commissural GABAergic and cholinergic motor neurons in the first larval stage but only in the cholinergic motor neurons in later larval stages and in adult animals. At the L1 larval stage, mainly localized at the nerve ring and at the dorsal cord. Isoform b: Expressed in the commissural GABAergic and cholinergic motor neurons whose cell bodies reside in the ventral nerve cord and which extend axons into the ventral and dorsal nerve cord. Also expressed in the head neurons RIA, RIC, lateral IL1s, lateral IL2s, OLLs, RMEs and SABs, all of which extend axons into the nerve ring. Expressed in the embryogenic blast cells and the corresponding terminally differentiated ventral cord motor neurons and head neurons.

The protein localises to the cell projection. The protein resides in the axon. Its subcellular location is the secreted. It localises to the synapse. It is found in the extracellular space. The protein localises to the extracellular matrix. Its function is as follows. Component of an extracellular matrix cue that is involved in the guidance of dorsoventral midline migrations and in the specification of postsynaptic domains at neuromuscular junctions (NMJs). Acts as a ligand for the netrin receptor unc-40 and the neuroligin receptor nlg-1. Secreted by the dorsal and ventral nerve cords to attract sensory axons and muscle membrane extensions called muscle arms. In parallel with unc-6 and slt-1, involved in the netrin receptor unc-40 dependent guidance of the AVM and PVM mechanosensory axons along the dorsal-ventral axis. The unc-40 coreceptor eva-1 is enhancing the responsiveness of unc-40 to the madd-4 guidance cue to attract the muscle arm extensions and AVM mechanosensory axons towards the dorsoventral midline. Acts as a synaptic organizer and is required for the specification of inhibitory GABAergic and excitatory cholinergic identities of postsynaptic domains at neuromuscular junctions (NMJs). Required for the recruitment of unc-40 to both cholinergic and GABAergic NMJs. Promotes the clustering of ACh receptors and GABA(A) receptors at postsynaptic sites during synaptogenesis. The binding to the presynaptic adhesion protein nrx-1 and to the neuroligin nlg-1 at postsynaptic sites promotes clustering of GABAergic receptors at postsynaptic NMJs, thereby contributing to normal GABAergic synaptic transmission. Functionally, isoform a and isoform c: Promotes the clustering of acetylcholine receptors (AChR) at excitatory cholinergic synapses of NMJs via the netrin receptor unc-40. In terms of biological role, acts as a guidance cue in the attraction of muscle membrane extensions (muscle arms) to the dorsal cord and in cooperation with unc-6 to the ventral cord via the netrin receptor unc-40 and via the unc-40 coreceptor eva-1. Together with nrx-1, clusters netrin receptor unc-40 and neuroligin nlg-1 at postsynaptic sites of GABAergic NMJs, thereby promoting the recruitment of GABA(A) receptors at GABAergic synapses. Prevents the recruitment of GABAergic receptors to cholinergic synapses. The sequence is that of Protein madd-4 from Caenorhabditis elegans.